The chain runs to 119 residues: Autophagy-related protein 8C-like (119 aa).

A lipid anchor (Phosphatidylethanolamine amidated glycine) is attached at Gly117. The propeptide at 118–119 (SF) is removed in mature form.

The protein belongs to the ATG8 family. As to quaternary structure, interacts with ATG4. Interacts with the Phytophtora infestans effector PexRD54. Interacts with JOKA2. The C-terminal 2 residues are removed by ATG4 to expose Gly-117 at the C-terminus. The C-terminal Gly is then amidated with phosphatidylethanolamine by an activating system similar to that for ubiquitin. The phosphatidylethanolamine amidated glycine is required for autophagosome formation.

The protein localises to the cytoplasmic vesicle. Its subcellular location is the autophagosome membrane. It localises to the vacuole membrane. It is found in the cytoplasm. The protein resides in the cytoskeleton. Functionally, ubiquitin-like modifier involved in autophagosomes formation. May mediate the delivery of the autophagosomes to the vacuole via the microtubule cytoskeleton. ATG8CL-mediated selective autophagy contributes to defense against the fungal pathogen Phytophtora infestans. This Solanum tuberosum (Potato) protein is Autophagy-related protein 8C-like.